A 338-amino-acid chain; its full sequence is Flap endonuclease 1 (338 aa).

The tract at residues 1–98 (MGTDIGDLLQ…ETLNRRKEVR (98 aa)) is N-domain. 7 residues coordinate Mg(2+): Asp27, Asp80, Glu152, Glu154, Asp173, Asp175, and Asp236. Residues 116–257 (AAYKYAQASS…TALKLIKKHG (142 aa)) form an I-domain region. Residues 330 to 338 (RQQTLDQWF) are interaction with PCNA.

Belongs to the XPG/RAD2 endonuclease family. FEN1 subfamily. Interacts with PCNA. PCNA stimulates the nuclease activity without altering cleavage specificity. It depends on Mg(2+) as a cofactor.

Its function is as follows. Structure-specific nuclease with 5'-flap endonuclease and 5'-3' exonuclease activities involved in DNA replication and repair. During DNA replication, cleaves the 5'-overhanging flap structure that is generated by displacement synthesis when DNA polymerase encounters the 5'-end of a downstream Okazaki fragment. Binds the unpaired 3'-DNA end and kinks the DNA to facilitate 5' cleavage specificity. Cleaves one nucleotide into the double-stranded DNA from the junction in flap DNA, leaving a nick for ligation. Also involved in the base excision repair (BER) pathway. Acts as a genome stabilization factor that prevents flaps from equilibrating into structures that lead to duplications and deletions. Also possesses 5'-3' exonuclease activity on nicked or gapped double-stranded DNA. This Methanosarcina barkeri (strain Fusaro / DSM 804) protein is Flap endonuclease 1.